Reading from the N-terminus, the 193-residue chain is Potassium-transporting ATPase KdpC subunit (193 aa).

Residues 7-27 (PMIVIFAVLAALTGLAYPAVM) form a helical membrane-spanning segment.

It belongs to the KdpC family. In terms of assembly, the system is composed of three essential subunits: KdpA, KdpB and KdpC.

It is found in the cell inner membrane. Its function is as follows. Part of the high-affinity ATP-driven potassium transport (or Kdp) system, which catalyzes the hydrolysis of ATP coupled with the electrogenic transport of potassium into the cytoplasm. This subunit acts as a catalytic chaperone that increases the ATP-binding affinity of the ATP-hydrolyzing subunit KdpB by the formation of a transient KdpB/KdpC/ATP ternary complex. This Paraburkholderia phymatum (strain DSM 17167 / CIP 108236 / LMG 21445 / STM815) (Burkholderia phymatum) protein is Potassium-transporting ATPase KdpC subunit.